We begin with the raw amino-acid sequence, 453 residues long: Chromosomal replication initiator protein DnaA (453 aa).

The domain I, interacts with DnaA modulators stretch occupies residues 1-79 (MKSLIQEKWN…KTAIAEVINQ (79 aa)). A domain II region spans residues 79 to 111 (QDFEIEFVLLSQTKAEEKVQTQAPNKIKNESLS). The domain III, AAA+ region stretch occupies residues 112–330 (YLNPRYTFDT…GALTKIVALS (219 aa)). G156, G158, K159, and T160 together coordinate ATP. The tract at residues 331-453 (RLKKKEVDVI…VLIKKINPTP (123 aa)) is domain IV, binds dsDNA.

It belongs to the DnaA family. Oligomerizes as a right-handed, spiral filament on DNA at oriC.

The protein localises to the cytoplasm. In terms of biological role, plays an essential role in the initiation and regulation of chromosomal replication. ATP-DnaA binds to the origin of replication (oriC) to initiate formation of the DNA replication initiation complex once per cell cycle. Binds the DnaA box (a 9 base pair repeat at the origin) and separates the double-stranded (ds)DNA. Forms a right-handed helical filament on oriC DNA; dsDNA binds to the exterior of the filament while single-stranded (ss)DNA is stabiized in the filament's interior. The ATP-DnaA-oriC complex binds and stabilizes one strand of the AT-rich DNA unwinding element (DUE), permitting loading of DNA polymerase. After initiation quickly degrades to an ADP-DnaA complex that is not apt for DNA replication. Binds acidic phospholipids. This is Chromosomal replication initiator protein DnaA from Lachnoclostridium phytofermentans (strain ATCC 700394 / DSM 18823 / ISDg) (Clostridium phytofermentans).